A 131-amino-acid chain; its full sequence is Transcription antitermination protein NusB (131 aa).

This sequence belongs to the NusB family.

In terms of biological role, involved in transcription antitermination. Required for transcription of ribosomal RNA (rRNA) genes. Binds specifically to the boxA antiterminator sequence of the ribosomal RNA (rrn) operons. The protein is Transcription antitermination protein NusB of Ligilactobacillus salivarius (strain UCC118) (Lactobacillus salivarius).